The primary structure comprises 314 residues: tRNA dimethylallyltransferase (314 aa).

6–13 (GPTAVGKT) is an ATP binding site. Substrate is bound at residue 8–13 (TAVGKT). Residues 31-34 (DSRQ) are interaction with substrate tRNA.

The protein belongs to the IPP transferase family. In terms of assembly, monomer. Requires Mg(2+) as cofactor.

It catalyses the reaction adenosine(37) in tRNA + dimethylallyl diphosphate = N(6)-dimethylallyladenosine(37) in tRNA + diphosphate. Its function is as follows. Catalyzes the transfer of a dimethylallyl group onto the adenine at position 37 in tRNAs that read codons beginning with uridine, leading to the formation of N6-(dimethylallyl)adenosine (i(6)A). In Pseudothermotoga lettingae (strain ATCC BAA-301 / DSM 14385 / NBRC 107922 / TMO) (Thermotoga lettingae), this protein is tRNA dimethylallyltransferase.